The chain runs to 680 residues: Epithelial splicing regulatory protein 1 (680 aa).

3 RRM domains span residues 224–301, 325–405, and 444–524; these read TVVR…KATG, VIVR…RSTA, and DCIR…QCSA. At serine 542 the chain carries Phosphoserine. An Omega-N-methylarginine modification is found at arginine 581.

The protein belongs to the ESRP family. Epithelial cell-specific. Epithelial-specific expression in diverse tissues and organs with particularly notable levels of expression in skin and gastrointestinal epithelia.

It localises to the nucleus. MRNA splicing factor that regulates the formation of epithelial cell-specific isoforms. Specifically regulates the expression of FGFR2-IIIb, an epithelial cell-specific isoform of FGFR2. Also regulates the splicing of CD44, CTNND1, ENAH, 3 transcripts that undergo changes in splicing during the epithelial-to-mesenchymal transition (EMT). Acts by directly binding specific sequences in mRNAs. Binds the GU-rich sequence motifs in the ISE/ISS-3, a cis-element regulatory region present in the mRNA of FGFR2. Regulates splicing and expression of genes involved in inner ear development, auditory hair cell differentiation, and cell fate specification in the cochlear epithelium. The protein is Epithelial splicing regulatory protein 1 (Esrp1) of Mus musculus (Mouse).